The following is a 367-amino-acid chain: Glutamate 5-kinase (367 aa).

An ATP-binding site is contributed by lysine 10. Residues serine 50, aspartate 137, and asparagine 149 each coordinate substrate. ATP contacts are provided by residues 169–170 (TD) and 211–217 (TGGMSTK). The PUA domain maps to 275-353 (AGEITVDEGA…QEIDAILGYE (79 aa)).

Belongs to the glutamate 5-kinase family.

Its subcellular location is the cytoplasm. It carries out the reaction L-glutamate + ATP = L-glutamyl 5-phosphate + ADP. The protein operates within amino-acid biosynthesis; L-proline biosynthesis; L-glutamate 5-semialdehyde from L-glutamate: step 1/2. Functionally, catalyzes the transfer of a phosphate group to glutamate to form L-glutamate 5-phosphate. The sequence is that of Glutamate 5-kinase from Shigella flexneri.